Reading from the N-terminus, the 210-residue chain is MTPLFAPVPHRLGLYPVVDSVEWVTRLLDAGVRTLQLRIKDKTDAEVETDIAAAIALGQRYHARLFINDYWRLAIKHQAYGVHLGQEDLETADPDAIRRAGLRLGVSTHDDMEIDVALAVRPSYIALGHVFPTQTKQMPSAPQGLAQLAAHVKRLGDYPTVAIGGISLERAPAVLETGVGSIAVVSAITQAPDWRGATQRLLELAGVGDE.

4-amino-2-methyl-5-(diphosphooxymethyl)pyrimidine-binding positions include 36-40 (QLRIK) and N68. Residues D69 and D88 each coordinate Mg(2+). S107 is a binding site for 4-amino-2-methyl-5-(diphosphooxymethyl)pyrimidine. 133–135 (TQT) provides a ligand contact to 2-[(2R,5Z)-2-carboxy-4-methylthiazol-5(2H)-ylidene]ethyl phosphate. K136 lines the 4-amino-2-methyl-5-(diphosphooxymethyl)pyrimidine pocket. 2-[(2R,5Z)-2-carboxy-4-methylthiazol-5(2H)-ylidene]ethyl phosphate-binding positions include G165 and 185-186 (VS).

It belongs to the thiamine-phosphate synthase family. Requires Mg(2+) as cofactor.

The enzyme catalyses 2-[(2R,5Z)-2-carboxy-4-methylthiazol-5(2H)-ylidene]ethyl phosphate + 4-amino-2-methyl-5-(diphosphooxymethyl)pyrimidine + 2 H(+) = thiamine phosphate + CO2 + diphosphate. It catalyses the reaction 2-(2-carboxy-4-methylthiazol-5-yl)ethyl phosphate + 4-amino-2-methyl-5-(diphosphooxymethyl)pyrimidine + 2 H(+) = thiamine phosphate + CO2 + diphosphate. It carries out the reaction 4-methyl-5-(2-phosphooxyethyl)-thiazole + 4-amino-2-methyl-5-(diphosphooxymethyl)pyrimidine + H(+) = thiamine phosphate + diphosphate. Its pathway is cofactor biosynthesis; thiamine diphosphate biosynthesis; thiamine phosphate from 4-amino-2-methyl-5-diphosphomethylpyrimidine and 4-methyl-5-(2-phosphoethyl)-thiazole: step 1/1. Functionally, condenses 4-methyl-5-(beta-hydroxyethyl)thiazole monophosphate (THZ-P) and 2-methyl-4-amino-5-hydroxymethyl pyrimidine pyrophosphate (HMP-PP) to form thiamine monophosphate (TMP). The sequence is that of Thiamine-phosphate synthase from Cronobacter sakazakii (strain ATCC BAA-894) (Enterobacter sakazakii).